Reading from the N-terminus, the 329-residue chain is Uroporphyrinogen decarboxylase (329 aa).

Residues Arg22–Arg26, Asp71, Tyr140, Ser195, and His307 contribute to the substrate site.

Belongs to the uroporphyrinogen decarboxylase family. In terms of assembly, homodimer.

It localises to the cytoplasm. The enzyme catalyses uroporphyrinogen III + 4 H(+) = coproporphyrinogen III + 4 CO2. It participates in porphyrin-containing compound metabolism; protoporphyrin-IX biosynthesis; coproporphyrinogen-III from 5-aminolevulinate: step 4/4. Its function is as follows. Catalyzes the decarboxylation of four acetate groups of uroporphyrinogen-III to yield coproporphyrinogen-III. The polypeptide is Uroporphyrinogen decarboxylase (Chlamydia pneumoniae (Chlamydophila pneumoniae)).